The following is a 327-amino-acid chain: tRNA-dihydrouridine(20/20a) synthase (327 aa).

FMN-binding positions include 17–19 and Gln-69; that span reads PML. Cys-99 acts as the Proton donor in catalysis. FMN contacts are provided by residues Lys-138, His-170, 210–212, and 232–233; these read NGG and GR.

This sequence belongs to the Dus family. DusA subfamily. Requires FMN as cofactor.

It carries out the reaction 5,6-dihydrouridine(20) in tRNA + NADP(+) = uridine(20) in tRNA + NADPH + H(+). The catalysed reaction is 5,6-dihydrouridine(20) in tRNA + NAD(+) = uridine(20) in tRNA + NADH + H(+). The enzyme catalyses 5,6-dihydrouridine(20a) in tRNA + NADP(+) = uridine(20a) in tRNA + NADPH + H(+). It catalyses the reaction 5,6-dihydrouridine(20a) in tRNA + NAD(+) = uridine(20a) in tRNA + NADH + H(+). Functionally, catalyzes the synthesis of 5,6-dihydrouridine (D), a modified base found in the D-loop of most tRNAs, via the reduction of the C5-C6 double bond in target uridines. Specifically modifies U20 and U20a in tRNAs. The sequence is that of tRNA-dihydrouridine(20/20a) synthase from Pasteurella multocida (strain Pm70).